The chain runs to 456 residues: MEGQQHGEQLKRGLKNRHIQLIALGGAIGTGLFLGSASVIQSAGPGIILGYAIAGFIAFLIMRQLGEMVVEEPVAGSFSHFAYKYWGSFAGFASGWNYWVLYVLVAMAELTAVGKYIQFWYPEIPTWVSAAVFFVVINAINLTNVKVFGEMEFWFAIIKVIAVVAMIIFGAWLLFSGNGGPQASVSNLWDQGGFLPHGFTGLVMMMAIIMFSFGGLELVGITAAEADNPEQSIPKATNQVIYRILIFYIGSLAVLLSLMPWTRVTADTSPFVLIFHELGDTFVANALNIVVLTAALSVYNSCVYCNSRMLFGLAQQGNAPKALASVDKRGVPVNTILVSALVTALCVLINYLAPESAFGLLMALVVSALVINWAMISLAHMKFRRAKQEQGVVTRFPALLYPLGNWICLLFMAAVLVIMLMTPGMAISVYLIPVWLIVLGIGYLFKEKTAKAVKAH.

Residues 1–18 are Cytoplasmic-facing; it reads MEGQQHGEQLKRGLKNRH. A helical transmembrane segment spans residues 19 to 39; sequence IQLIALGGAIGTGLFLGSASV. The Periplasmic portion of the chain corresponds to 40–41; that stretch reads IQ. Residues 42-62 traverse the membrane as a helical segment; that stretch reads SAGPGIILGYAIAGFIAFLIM. The Cytoplasmic segment spans residues 63–85; the sequence is RQLGEMVVEEPVAGSFSHFAYKY. The chain crosses the membrane as a helical span at residues 86–106; the sequence is WGSFAGFASGWNYWVLYVLVA. At 107–116 the chain is on the periplasmic side; it reads MAELTAVGKY. Residues 117–137 form a helical membrane-spanning segment; it reads IQFWYPEIPTWVSAAVFFVVI. The Cytoplasmic portion of the chain corresponds to 138 to 154; the sequence is NAINLTNVKVFGEMEFW. Residues 155–175 traverse the membrane as a helical segment; the sequence is FAIIKVIAVVAMIIFGAWLLF. Residues 176 to 200 are Periplasmic-facing; it reads SGNGGPQASVSNLWDQGGFLPHGFT. Residues 201-221 traverse the membrane as a helical segment; sequence GLVMMMAIIMFSFGGLELVGI. Residues 222-239 are Cytoplasmic-facing; that stretch reads TAAEADNPEQSIPKATNQ. Residues 240-260 traverse the membrane as a helical segment; it reads VIYRILIFYIGSLAVLLSLMP. Residues 261-270 are Periplasmic-facing; sequence WTRVTADTSP. Residues 271–291 traverse the membrane as a helical segment; sequence FVLIFHELGDTFVANALNIVV. At 292–332 the chain is on the cytoplasmic side; that stretch reads LTAALSVYNSCVYCNSRMLFGLAQQGNAPKALASVDKRGVP. A helical transmembrane segment spans residues 333 to 353; it reads VNTILVSALVTALCVLINYLA. The Periplasmic portion of the chain corresponds to 354 to 357; it reads PESA. The chain crosses the membrane as a helical span at residues 358–378; that stretch reads FGLLMALVVSALVINWAMISL. Residues 379–398 lie on the Cytoplasmic side of the membrane; that stretch reads AHMKFRRAKQEQGVVTRFPA. The helical transmembrane segment at 399–419 threads the bilayer; the sequence is LLYPLGNWICLLFMAAVLVIM. Over 420–424 the chain is Periplasmic; sequence LMTPG. A helical membrane pass occupies residues 425-445; that stretch reads MAISVYLIPVWLIVLGIGYLF. Topologically, residues 446–456 are cytoplasmic; that stretch reads KEKTAKAVKAH.

This sequence belongs to the amino acid-polyamine-organocation (APC) superfamily. Amino acid transporter (AAT) (TC 2.A.3.1) family.

The protein localises to the cell inner membrane. It catalyses the reaction L-phenylalanine(in) + H(+)(in) = L-phenylalanine(out) + H(+)(out). The enzyme catalyses L-tryptophan(in) + H(+)(in) = L-tryptophan(out) + H(+)(out). It carries out the reaction L-tyrosine(in) + H(+)(in) = L-tyrosine(out) + H(+)(out). Functionally, permease that is involved in the active transport across the cytoplasmic membrane of all three aromatic amino acids, phenylalanine, tyrosine and tryptophan. In Escherichia coli O6:H1 (strain CFT073 / ATCC 700928 / UPEC), this protein is Aromatic amino acid transport protein AroP (aroP).